A 313-amino-acid polypeptide reads, in one-letter code: Ribosomal RNA small subunit methyltransferase H (313 aa).

Residues 35-37 (GGH), aspartate 55, phenylalanine 79, aspartate 101, and glutamine 108 contribute to the S-adenosyl-L-methionine site.

Belongs to the methyltransferase superfamily. RsmH family.

Its subcellular location is the cytoplasm. The enzyme catalyses cytidine(1402) in 16S rRNA + S-adenosyl-L-methionine = N(4)-methylcytidine(1402) in 16S rRNA + S-adenosyl-L-homocysteine + H(+). Specifically methylates the N4 position of cytidine in position 1402 (C1402) of 16S rRNA. The protein is Ribosomal RNA small subunit methyltransferase H of Musicola paradisiaca (strain Ech703) (Dickeya paradisiaca).